Consider the following 398-residue polypeptide: Elongation factor Tu (398 aa).

One can recognise a tr-type G domain in the interval Lys-10–Glu-207. Positions Gly-19–Thr-26 are G1. A GTP-binding site is contributed by Gly-19–Thr-26. Residue Thr-26 participates in Mg(2+) binding. Residues Gly-63–Asn-67 form a G2 region. The interval Asp-84–Gly-87 is G3. Residues Asp-84 to His-88 and Asn-139 to Asp-142 contribute to the GTP site. The segment at Asn-139 to Asp-142 is G4. Positions Ser-177–Leu-179 are G5.

The protein belongs to the TRAFAC class translation factor GTPase superfamily. Classic translation factor GTPase family. EF-Tu/EF-1A subfamily. As to quaternary structure, monomer.

Its subcellular location is the cytoplasm. It catalyses the reaction GTP + H2O = GDP + phosphate + H(+). Its function is as follows. GTP hydrolase that promotes the GTP-dependent binding of aminoacyl-tRNA to the A-site of ribosomes during protein biosynthesis. In Streptococcus equi subsp. zooepidemicus (strain MGCS10565), this protein is Elongation factor Tu.